The following is a 796-amino-acid chain: Pathogenesis-related homeodomain protein (796 aa).

Disordered stretches follow at residues lysine 34–cysteine 57 and valine 80–valine 99. Basic residues predominate over residues lysine 81–arginine 90. The segment at histidine 190–lysine 247 adopts a PHD-type zinc-finger fold. Disordered regions lie at residues serine 282–serine 347, leucine 393–valine 422, and asparagine 511–glutamate 736. A compositionally biased stretch (acidic residues) spans tryptophan 292–aspartate 303. The homeobox DNA-binding region spans glycine 452 to asparagine 511. Composition is skewed to polar residues over residues glutamate 538–glutamine 547 and alanine 560–cysteine 569. Positions asparagine 570–asparagine 580 are enriched in low complexity. The span at valine 581–serine 600 shows a compositional bias: polar residues. 4 consecutive repeat copies span residues proline 605–glutamate 631, proline 632–glutamate 658, proline 659–glutamate 685, and proline 686–glutamate 712. A 5 X 27 AA tandem repeats region spans residues proline 605–glutamate 735. Basic and acidic residues-rich tracts occupy residues threonine 624 to leucine 636, alanine 645 to leucine 690, and valine 700 to threonine 733. One copy of the 5; truncated repeat lies at serine 713–glutamate 735. The interval leucine 738 to leucine 759 is leucine-zipper.

This sequence belongs to the PHD-associated homeobox family.

The protein localises to the nucleus. In terms of biological role, specifically binds to the fungal elicitor-responsive DNA element, 5'-CTAATTGTTTA-3', of the gene PR2 promoter. The polypeptide is Pathogenesis-related homeodomain protein (PRH) (Arabidopsis thaliana (Mouse-ear cress)).